A 287-amino-acid chain; its full sequence is U-megalopygitoxin(8)-Mc8 (287 aa).

Residues 1–17 (MYLQYLVLSLFSTTVYG) form the signal peptide.

This sequence belongs to the caterpillar 8 family. Contains 2 disulfide bonds. As to expression, expressed by the venom apparatus.

It localises to the secreted. Probable toxin. This is U-megalopygitoxin(8)-Mc8 from Megalopyge crispata (Black-waved flannel moth).